The chain runs to 544 residues: Flagellar hook-associated protein 1 (544 aa).

Belongs to the flagella basal body rod proteins family.

It is found in the secreted. The protein resides in the bacterial flagellum. The protein is Flagellar hook-associated protein 1 (flgK) of Buchnera aphidicola subsp. Schizaphis graminum (strain Sg).